The chain runs to 628 residues: Chaperone protein HtpG (628 aa).

The a; substrate-binding stretch occupies residues 1 to 334 (MTTIDTASET…SEDLPLNLSR (334 aa)). The b stretch occupies residues 335-550 (EMLQNNPQLA…GFGPDRELEK (216 aa)). Residues 551-628 (MLARANKGAA…LVLRGVVAHG (78 aa)) form a c region.

This sequence belongs to the heat shock protein 90 family. Homodimer.

It localises to the cytoplasm. In terms of biological role, molecular chaperone. Has ATPase activity. In Rhodopseudomonas palustris (strain HaA2), this protein is Chaperone protein HtpG.